The chain runs to 668 residues: DNA ligase (668 aa).

Residues D35–D39 and S83–L84 each bind NAD(+). The active-site N6-AMP-lysine intermediate is K125. NAD(+) contacts are provided by R147, E181, and K317. The Zn(2+) site is built by C410, C413, C426, and C432. One can recognise a BRCT domain in the interval K591–N668.

This sequence belongs to the NAD-dependent DNA ligase family. LigA subfamily. Requires Mg(2+) as cofactor. Mn(2+) is required as a cofactor.

It carries out the reaction NAD(+) + (deoxyribonucleotide)n-3'-hydroxyl + 5'-phospho-(deoxyribonucleotide)m = (deoxyribonucleotide)n+m + AMP + beta-nicotinamide D-nucleotide.. Its function is as follows. DNA ligase that catalyzes the formation of phosphodiester linkages between 5'-phosphoryl and 3'-hydroxyl groups in double-stranded DNA using NAD as a coenzyme and as the energy source for the reaction. It is essential for DNA replication and repair of damaged DNA. The protein is DNA ligase of Clostridium tetani (strain Massachusetts / E88).